Reading from the N-terminus, the 231-residue chain is L-ribulose-5-phosphate 4-epimerase SgbE (231 aa).

Residues Gly-27–Asn-28, Ser-44–Gly-45, and Ser-74–Ser-75 contribute to the substrate site. Residues Asp-76, His-95, and His-97 each coordinate Zn(2+). Asp-120 (proton donor/acceptor) is an active-site residue. His-171 is a Zn(2+) binding site. The active-site Proton donor/acceptor is the Tyr-229.

Belongs to the aldolase class II family. AraD/FucA subfamily. Zn(2+) is required as a cofactor.

It catalyses the reaction L-ribulose 5-phosphate = D-xylulose 5-phosphate. In terms of biological role, catalyzes the interconversion of L-ribulose 5-phosphate (LRu5P) and D-xylulose 5-phosphate (D-Xu5P) via a retroaldol/aldol mechanism (carbon-carbon bond cleavage analogous to a class II aldolase reaction). May be involved in the utilization of 2,3-diketo-L-gulonate. The polypeptide is L-ribulose-5-phosphate 4-epimerase SgbE (Escherichia coli (strain K12)).